The following is a 102-amino-acid chain: MIPGQYQIQPGDIELNDGRRTLSLAVANSGDRPIQVGSHFHFFETNDALTFDRAASRGMRLNIPAGTAVRFEPGQSREVELVDLAGLRKVYGFAGRVMGDLD.

It belongs to the urease beta subunit family. In terms of assembly, heterotrimer of UreA (gamma), UreB (beta) and UreC (alpha) subunits. Three heterotrimers associate to form the active enzyme.

It is found in the cytoplasm. The catalysed reaction is urea + 2 H2O + H(+) = hydrogencarbonate + 2 NH4(+). It functions in the pathway nitrogen metabolism; urea degradation; CO(2) and NH(3) from urea (urease route): step 1/1. The protein is Urease subunit beta of Pseudomonas savastanoi pv. phaseolicola (strain 1448A / Race 6) (Pseudomonas syringae pv. phaseolicola (strain 1448A / Race 6)).